The following is a 236-amino-acid chain: Leucyl/phenylalanyl-tRNA--protein transferase (236 aa).

This sequence belongs to the L/F-transferase family.

The protein localises to the cytoplasm. It carries out the reaction N-terminal L-lysyl-[protein] + L-leucyl-tRNA(Leu) = N-terminal L-leucyl-L-lysyl-[protein] + tRNA(Leu) + H(+). It catalyses the reaction N-terminal L-arginyl-[protein] + L-leucyl-tRNA(Leu) = N-terminal L-leucyl-L-arginyl-[protein] + tRNA(Leu) + H(+). The catalysed reaction is L-phenylalanyl-tRNA(Phe) + an N-terminal L-alpha-aminoacyl-[protein] = an N-terminal L-phenylalanyl-L-alpha-aminoacyl-[protein] + tRNA(Phe). Its function is as follows. Functions in the N-end rule pathway of protein degradation where it conjugates Leu, Phe and, less efficiently, Met from aminoacyl-tRNAs to the N-termini of proteins containing an N-terminal arginine or lysine. The chain is Leucyl/phenylalanyl-tRNA--protein transferase from Shewanella sediminis (strain HAW-EB3).